The primary structure comprises 383 residues: Lipid-A-disaccharide synthase (383 aa).

Belongs to the LpxB family.

The catalysed reaction is 2-N,3-O-bis[(3R)-3-hydroxytetradecanoyl]-alpha-D-glucosaminyl 1-phosphate + UDP-2-N,3-O-bis[(3R)-3-hydroxytetradecanoyl]-alpha-D-glucosamine = lipid A disaccharide (E. coli) + UDP + H(+). It catalyses the reaction a lipid X + a UDP-2-N,3-O-bis[(3R)-3-hydroxyacyl]-alpha-D-glucosamine = a lipid A disaccharide + UDP + H(+). The protein operates within glycolipid biosynthesis; lipid IV(A) biosynthesis; lipid IV(A) from (3R)-3-hydroxytetradecanoyl-[acyl-carrier-protein] and UDP-N-acetyl-alpha-D-glucosamine: step 5/6. In terms of biological role, condensation of UDP-2,3-diacylglucosamine and 2,3-diacylglucosamine-1-phosphate to form lipid A disaccharide, a precursor of lipid A, a phosphorylated glycolipid that anchors the lipopolysaccharide to the outer membrane of the cell. This is Lipid-A-disaccharide synthase from Klebsiella pneumoniae (strain 342).